The chain runs to 134 residues: MKPSERRKARRLAVQAIYSWQLSGNNVADVEHEFLTEQKIDGVDVSYFRELLSGTTTKSAQLDELIMPHLERPFDEVSPIEKAVLRIATYELTFRKDVPYKVAINEAIELAKAFGAEDGHKFVNGILDKIVAKK.

This sequence belongs to the NusB family.

Involved in transcription antitermination. Required for transcription of ribosomal RNA (rRNA) genes. Binds specifically to the boxA antiterminator sequence of the ribosomal RNA (rrn) operons. The chain is Transcription antitermination protein NusB from Shewanella loihica (strain ATCC BAA-1088 / PV-4).